A 397-amino-acid polypeptide reads, in one-letter code: Elongation factor Tu (397 aa).

Positions lysine 10 to glutamate 206 constitute a tr-type G domain. Positions glycine 19–threonine 26 are G1. Glycine 19 to threonine 26 lines the GTP pocket. Position 26 (threonine 26) interacts with Mg(2+). Positions glycine 61–serine 65 are G2. Positions aspartate 82–glycine 85 are G3. GTP-binding positions include aspartate 82 to histidine 86 and asparagine 137 to aspartate 140. The G4 stretch occupies residues asparagine 137–aspartate 140. The tract at residues serine 175–leucine 177 is G5.

This sequence belongs to the TRAFAC class translation factor GTPase superfamily. Classic translation factor GTPase family. EF-Tu/EF-1A subfamily. As to quaternary structure, monomer.

It is found in the cytoplasm. The catalysed reaction is GTP + H2O = GDP + phosphate + H(+). Its function is as follows. GTP hydrolase that promotes the GTP-dependent binding of aminoacyl-tRNA to the A-site of ribosomes during protein biosynthesis. This is Elongation factor Tu from Lachnospira eligens (strain ATCC 27750 / DSM 3376 / VPI C15-48 / C15-B4) (Eubacterium eligens).